A 661-amino-acid polypeptide reads, in one-letter code: UvrABC system protein B (661 aa).

One can recognise a Helicase ATP-binding domain in the interval 25–182; sequence KGLNNKKRSQ…NDLVNLQYER (158 aa). Residue 38-45 coordinates ATP; that stretch reads GITGSGKT. The short motif at 91–114 is the Beta-hairpin element; that stretch reads YYDYYQPEAYIPKTDVFIEKDSSI. Residues 430 to 592 form the Helicase C-terminal domain; that stretch reads QVEDLVGEIQ…IIPKTINRTI (163 aa). A UVR domain is found at 621–656; that stretch reads KAHIDKLRKEMLKAASNLEFEQAAKLRDQLKTLEEA.

It belongs to the UvrB family. In terms of assembly, forms a heterotetramer with UvrA during the search for lesions. Interacts with UvrC in an incision complex.

It is found in the cytoplasm. In terms of biological role, the UvrABC repair system catalyzes the recognition and processing of DNA lesions. A damage recognition complex composed of 2 UvrA and 2 UvrB subunits scans DNA for abnormalities. Upon binding of the UvrA(2)B(2) complex to a putative damaged site, the DNA wraps around one UvrB monomer. DNA wrap is dependent on ATP binding by UvrB and probably causes local melting of the DNA helix, facilitating insertion of UvrB beta-hairpin between the DNA strands. Then UvrB probes one DNA strand for the presence of a lesion. If a lesion is found the UvrA subunits dissociate and the UvrB-DNA preincision complex is formed. This complex is subsequently bound by UvrC and the second UvrB is released. If no lesion is found, the DNA wraps around the other UvrB subunit that will check the other stand for damage. This Rickettsia bellii (strain OSU 85-389) protein is UvrABC system protein B.